We begin with the raw amino-acid sequence, 116 residues long: Ig heavy chain V region 3-6 (116 aa).

The N-terminal stretch at 1–18 is a signal peptide; that stretch reads MKVLSLLYLLTAIPGILS. Positions 19-48 are framework-1; that stretch reads DVQLQESGPGLVKPSQSLSLTCSVTGYSIT. Cys-40 and Cys-114 form a disulfide bridge. The complementarity-determining-1 stretch occupies residues 49-53; that stretch reads SGYYW. Positions 54-67 are framework-2; the sequence is NWIRQFPGNKLEWM. Positions 68 to 84 are complementarity-determining-2; that stretch reads GYISYDGSNNYNPSLKN. The segment at 85–116 is framework-3; the sequence is RISITRDTSKNQFFLKLNSVTTEDTATYYCAR.

This is Ig heavy chain V region 3-6 (Ighv3-6) from Mus musculus (Mouse).